A 590-amino-acid polypeptide reads, in one-letter code: Cationic amino acid transporter 8, vacuolar (590 aa).

Over 1 to 85 (MIPASMEEAH…ESENPMRRCL (85 aa)) the chain is Cytoplasmic. The chain crosses the membrane as a helical span at residues 86 to 106 (TWWDLLWLSFGSVVGSGVFVI). Residues 107 to 114 (TGQEARVG) lie on the Vacuolar side of the membrane. Residues 115–135 (AGPAVVLSYAISGVSALLSVL) traverse the membrane as a helical segment. Over 136-160 (CYAEFGVEIPVAGGSFSYLRVELGD) the chain is Cytoplasmic. A helical membrane pass occupies residues 161–181 (FIAFIAAGNILLEAMVGAAGL). Topologically, residues 182–209 (GRSWSSYLASLVKNDSDYFRIKVDSFAK) are vacuolar. N-linked (GlcNAc...) asparagine glycosylation occurs at Asn195. A helical transmembrane segment spans residues 210-230 (GFDLLDPVAVAVLLVANGIAM). The Cytoplasmic portion of the chain corresponds to 231–238 (TGTKRTSW). The helical transmembrane segment at 239–259 (LNLITSMVTVCIIVFIVVVGF) threads the bilayer. Residues 260 to 266 (THSKTSN) lie on the Vacuolar side of the membrane. Residues 267-287 (LVPFFPYGAKGVVQSAAVVYW) traverse the membrane as a helical segment. Residues 288–310 (SYTGFDMVANMAEETEKPSRDIP) are Cytoplasmic-facing. The helical transmembrane segment at 311-331 (IGLVGSMSMITVVYCLMALAL) threads the bilayer. Over 332 to 359 (TMMVKYTEIDANAAYSVAFAQIGMKWAK) the chain is Vacuolar. A helical transmembrane segment spans residues 360-380 (YLVGICALKGMTTSLLVGSLG). Topologically, residues 381-407 (QARYTTQIARSHMIPPWFALVHPKTGT) are cytoplasmic. A helical transmembrane segment spans residues 408 to 428 (PIYATLLVTILSSIISFFTSL). Position 429 (Glu429) is a topological domain, vacuolar. Residues 430–450 (VLSSVFSFATLFIFMLVAVAL) form a helical membrane-spanning segment. Residues 451–465 (LVRRYYVKDVTPEAG) are Cytoplasmic-facing. A helical transmembrane segment spans residues 466-486 (LLKFLGFLFLIIASSIGVSAL). Over 487–493 (WNSGVKG) the chain is Vacuolar. The helical transmembrane segment at 494-514 (WIAYTVTGVIWFIGTLGLALL) threads the bilayer. Residues 515 to 522 (PKYRVPKV) lie on the Cytoplasmic side of the membrane. The helical transmembrane segment at 523–543 (WGVPLVPWLPSFSIAMNLFLI) threads the bilayer. Over 544–553 (GSLGYVAFLR) the chain is Vacuolar. The chain crosses the membrane as a helical span at residues 554 to 574 (FIICTMVMLLYYLFVGLHATY). The Cytoplasmic portion of the chain corresponds to 575–590 (DVAHQPLEEAKFEGER).

Belongs to the amino acid-polyamine-organocation (APC) superfamily. Cationic amino acid transporter (CAT) (TC 2.A.3.3) family. Expressed in roots, stems, flowers and leaves. Mostly present in young and rapidly dividing tissues such as the shoot and root apical meristem, and in young leaves and petioles during seedling development.

It is found in the cell membrane. Permease involved in the transport of the cationic neutral or acidic amino acids. The protein is Cationic amino acid transporter 8, vacuolar (CAT8) of Arabidopsis thaliana (Mouse-ear cress).